Consider the following 281-residue polypeptide: Fructose-bisphosphate aldolase class 1 (281 aa).

K191 functions as the Schiff-base intermediate with dihydroxyacetone-P in the catalytic mechanism.

This sequence belongs to the DeoC/FbaB aldolase family. As to quaternary structure, homooctamer.

It is found in the cytoplasm. It localises to the chromosome. The enzyme catalyses beta-D-fructose 1,6-bisphosphate = D-glyceraldehyde 3-phosphate + dihydroxyacetone phosphate. With respect to regulation, activated by citrate. The polypeptide is Fructose-bisphosphate aldolase class 1 (fba) (Thermococcus kodakarensis (strain ATCC BAA-918 / JCM 12380 / KOD1) (Pyrococcus kodakaraensis (strain KOD1))).